A 237-amino-acid polypeptide reads, in one-letter code: Phosphoribosylaminoimidazole-succinocarboxamide synthase (237 aa).

The protein belongs to the SAICAR synthetase family.

It carries out the reaction 5-amino-1-(5-phospho-D-ribosyl)imidazole-4-carboxylate + L-aspartate + ATP = (2S)-2-[5-amino-1-(5-phospho-beta-D-ribosyl)imidazole-4-carboxamido]succinate + ADP + phosphate + 2 H(+). The protein operates within purine metabolism; IMP biosynthesis via de novo pathway; 5-amino-1-(5-phospho-D-ribosyl)imidazole-4-carboxamide from 5-amino-1-(5-phospho-D-ribosyl)imidazole-4-carboxylate: step 1/2. In Hamiltonella defensa subsp. Acyrthosiphon pisum (strain 5AT), this protein is Phosphoribosylaminoimidazole-succinocarboxamide synthase.